The primary structure comprises 44 residues: uncharacterized protein (44 aa).

Positions 22 to 44 are disordered; it reads LNSAPAFKSSQNTSTQAKPTFSN.

This is an uncharacterized protein from Dictyostelium discoideum (Social amoeba).